The chain runs to 261 residues: NAD-capped RNA hydrolase NudC (261 aa).

2 residues coordinate substrate: Lys-25 and Arg-69. 2 residues coordinate Zn(2+): Cys-98 and Cys-101. Residue Glu-111 participates in substrate binding. Positions 116 and 119 each coordinate Zn(2+). Tyr-124 serves as a coordination point for substrate. Residues 125–248 enclose the Nudix hydrolase domain; it reads PQIAPCVIVA…TVARRLIEDT (124 aa). A divalent metal cation is bound by residues Ala-158, Glu-174, and Glu-178. The short motif at 159-180 is the Nudix box element; the sequence is GFVEVGETLEQAVSREVLEESN. 192 to 199 provides a ligand contact to substrate; sequence QPWPFPHS. An a divalent metal cation-binding site is contributed by Glu-219. Ala-241 contributes to the substrate binding site.

This sequence belongs to the Nudix hydrolase family. NudC subfamily. In terms of assembly, homodimer. Mg(2+) serves as cofactor. It depends on Mn(2+) as a cofactor. Zn(2+) is required as a cofactor.

The enzyme catalyses a 5'-end NAD(+)-phospho-ribonucleoside in mRNA + H2O = a 5'-end phospho-adenosine-phospho-ribonucleoside in mRNA + beta-nicotinamide D-ribonucleotide + 2 H(+). It carries out the reaction NAD(+) + H2O = beta-nicotinamide D-ribonucleotide + AMP + 2 H(+). It catalyses the reaction NADH + H2O = reduced beta-nicotinamide D-ribonucleotide + AMP + 2 H(+). In terms of biological role, mRNA decapping enzyme that specifically removes the nicotinamide adenine dinucleotide (NAD) cap from a subset of mRNAs by hydrolyzing the diphosphate linkage to produce nicotinamide mononucleotide (NMN) and 5' monophosphate mRNA. The NAD-cap is present at the 5'-end of some mRNAs and stabilizes RNA against 5'-processing. Has preference for mRNAs with a 5'-end purine. Catalyzes the hydrolysis of a broad range of dinucleotide pyrophosphates. The sequence is that of NAD-capped RNA hydrolase NudC from Yersinia enterocolitica serotype O:8 / biotype 1B (strain NCTC 13174 / 8081).